The primary structure comprises 332 residues: Geranylgeranyl pyrophosphate synthase dpasD (332 aa).

Lysine 55, arginine 58, and histidine 87 together coordinate isopentenyl diphosphate. Mg(2+)-binding residues include aspartate 94 and aspartate 98. Arginine 103 serves as a coordination point for dimethylallyl diphosphate. Position 104 (arginine 104) interacts with isopentenyl diphosphate. Dimethylallyl diphosphate is bound by residues lysine 181, threonine 182, and glutamine 215. Mg(2+) is bound at residue aspartate 218. Asparagine 222, lysine 232, and lysine 242 together coordinate dimethylallyl diphosphate.

It belongs to the FPP/GGPP synthase family. Requires Mg(2+) as cofactor.

It carries out the reaction isopentenyl diphosphate + dimethylallyl diphosphate = (2E)-geranyl diphosphate + diphosphate. The enzyme catalyses isopentenyl diphosphate + (2E)-geranyl diphosphate = (2E,6E)-farnesyl diphosphate + diphosphate. It catalyses the reaction isopentenyl diphosphate + (2E,6E)-farnesyl diphosphate = (2E,6E,10E)-geranylgeranyl diphosphate + diphosphate. It participates in secondary metabolite biosynthesis; terpenoid biosynthesis. Its function is as follows. Geranylgeranyl pyrophosphate synthase; part of the gene cluster that mediates the biosynthesis of the diterpenoid pyrones subglutinols A and B. The first step of the pathway is the synthesis of the alpha-pyrone moiety by the polyketide synthase dpasA via condensation of one acetyl-CoA starter unit with 3 malonyl-CoA units and 2 methylations. The alpha-pyrone is then combined with geranylgeranyl pyrophosphate (GGPP) formed by the GGPP synthase dpasD through the action of the prenyltransferase dpasC to yield a linear alpha-pyrone diterpenoid. Subsequent steps in the diterpenoid pyrone biosynthetic pathway involve the decalin core formation, which is initiated by the epoxidation of the C10-C11 olefin by the FAD-dependent oxidoreductase dpasE, and is followed by a cyclization cascade catalyzed by the terpene cyclase dpasB. The FAD-linked oxidoreductase dpasF is then involved in tetrahydrofuran (THF) ring formation at the C5 unit to complete the formation of subglutinols A and B. DpasF also possesses an additional catalytic ability of multi-step oxidations to generate a new DDP analog with an enone system at the C5 named FDDP A. This is Geranylgeranyl pyrophosphate synthase dpasD from Apiospora sacchari (Arthrinium sacchari).